The sequence spans 128 residues: Fluoride-specific ion channel FluC (128 aa).

4 consecutive transmembrane segments (helical) span residues 1–21 (MPERYAALLLVGAGGFVGATA), 45–65 (LAGCFLIGFISQLSVSSSLVS), 70–90 (LLLATGFCGGFTTFSSYMYEI), and 99–119 (IFYSTLYLLGSIVGGILCLYF). Residues G78 and T81 each coordinate Na(+).

This sequence belongs to the fluoride channel Fluc/FEX (TC 1.A.43) family.

The protein resides in the cell inner membrane. It catalyses the reaction fluoride(in) = fluoride(out). With respect to regulation, na(+) is not transported, but it plays an essential structural role and its presence is essential for fluoride channel function. Its function is as follows. Fluoride-specific ion channel. Important for reducing fluoride concentration in the cell, thus reducing its toxicity. The sequence is that of Fluoride-specific ion channel FluC from Chlorobium phaeobacteroides (strain BS1).